A 519-amino-acid polypeptide reads, in one-letter code: Cyclic AMP-responsive element-binding protein 3-like protein 1 (519 aa).

The tract at residues Met-1–Asp-60 is required for transcriptional activation. Over Met-1 to Thr-374 the chain is Cytoplasmic. The tract at residues Leu-71–Ser-98 is disordered. Over residues His-86–Gln-97 the composition is skewed to polar residues. A Glycyl lysine isopeptide (Lys-Gly) (interchain with G-Cter in SUMO2) cross-link involves residue Lys-184. Residues Asp-200–Pro-259 are disordered. Residues Ser-210–Arg-223 show a composition bias toward low complexity. Polar residues predominate over residues Arg-236 to Leu-246. The region spanning Ala-290–Leu-353 is the bZIP domain. Residues Lys-292–Lys-321 are basic motif. The interval Leu-332–Leu-353 is leucine-zipper. The helical; Signal-anchor for type II membrane protein transmembrane segment at Cys-375–Pro-395 threads the bilayer. The short motif at Pro-392–Pro-395 is the MBTPS2 recognition element. Over Glu-396 to Ser-519 the chain is Lumenal. The short motif at Arg-423–Leu-426 is the MBTPS1 recognition element. A disordered region spans residues Glu-484 to Ser-519. N-linked (GlcNAc...) asparagine glycosylation occurs at Asn-492. Basic and acidic residues predominate over residues Ser-499–Leu-510. Residue Asn-513 is glycosylated (N-linked (GlcNAc...) asparagine).

Belongs to the bZIP family. ATF subfamily. In terms of assembly, interacts with SMAD4, the interaction takes place upon TGFB1 induction and SMAD4 acts as a CREB3L1 coactivator to induce the expression of genes involved in assembly of collagen extracellular matrix. Post-translationally, upon ER stress or DNA damage, translocated to the Golgi apparatus, where it is processed by regulated intramembrane proteolysis (RIP) to release the cytosol-facing N-terminal transcription factor domain. The cleavage is performed sequentially by site-1 and site-2 proteases (S1P/MBTPS1 and S2P/MBTPS2). RIP is induced by TGFB1 and ceramide. In terms of processing, N-glycosylated. Ubiquitinated by HRD1/SYVN1; undergoes 'Lys-48'-linked ubiquitination, followed by rapid proteasomal degradation under normal conditions. Upon ER stress, SYVN1 E3 ubiquitin-protein ligase dissociates from its substrate, ubiquitination does not occur and CREB3L1 is stabilized. In terms of tissue distribution, expressed in several tissues, with highest levels in pancreas and prostate. Expressed at relatively lower levels in brain.

The protein resides in the endoplasmic reticulum membrane. Its subcellular location is the nucleus. Precursor of the transcription factor form (Processed cyclic AMP-responsive element-binding protein 3-like protein 1), which is embedded in the endoplasmic reticulum membrane with N-terminal DNA-binding and transcription activation domains oriented toward the cytosolic face of the membrane. In response to ER stress or DNA damage, transported to the Golgi, where it is cleaved in a site-specific manner by resident proteases S1P/MBTPS1 and S2P/MBTPS2. The released N-terminal cytosolic domain is translocated to the nucleus where it activates transcription of specific target genes involved in the cell-cycle progression inhibition. In terms of biological role, transcription factor involved in cell type specific DNA damage and unfolded protein response (UPR). Binds the DNA consensus sequence 5'-GTGXGCXGC-3'. Plays a critical role in bone formation through the transcription of COL1A1, and possibly COL1A2, and the secretion of bone matrix proteins. Directly binds to the UPR element (UPRE)-like sequence in an osteoblast-specific COL1A1 promoter region and induces its transcription. Does not regulate COL1A1 in other tissues, such as skin. Required to protect astrocytes from ER stress-induced cell death. In astrocytes, binds to the cAMP response element (CRE) of the BiP/HSPA5 promoter and participate in its transcriptional activation. In astrocytes and osteoblasts, upon DNA damage, inhibits cell-cycle progression after G2/M phase by binding to promoters and activating transcription of genes encoding cell-cycle inhibitors, such as p21/CDKN1A. Required for TGFB1 to activate genes involved in the assembly of collagen extracellular matrix. Its function is as follows. (Microbial infection) May play a role in limiting virus spread by inhibiting proliferation of virus-infected cells. Upon infection with diverse DNA and RNA viruses, inhibits cell-cycle progression by binding to promoters and activating transcription of genes encoding cell-cycle inhibitors, such as p21/CDKN1A. The polypeptide is Cyclic AMP-responsive element-binding protein 3-like protein 1 (Homo sapiens (Human)).